The sequence spans 78 residues: UPF0335 protein RrIowa_0193 (78 aa).

Belongs to the UPF0335 family.

The sequence is that of UPF0335 protein RrIowa_0193 from Rickettsia rickettsii (strain Iowa).